Consider the following 365-residue polypeptide: Tubulin-like protein CetZ (365 aa).

Residues 10–14 (QCGGK), 103–105 (GTG), E136, N163, and N181 each bind GTP.

This sequence belongs to the CetZ family.

It localises to the cytoplasm. Involved in cell shape control. This Pyrococcus abyssi (strain GE5 / Orsay) protein is Tubulin-like protein CetZ.